The sequence spans 481 residues: UDP-N-acetylmuramate--L-alanine ligase (481 aa).

An ATP-binding site is contributed by 115–121 (GTHGKTT).

This sequence belongs to the MurCDEF family.

The protein resides in the cytoplasm. The catalysed reaction is UDP-N-acetyl-alpha-D-muramate + L-alanine + ATP = UDP-N-acetyl-alpha-D-muramoyl-L-alanine + ADP + phosphate + H(+). The protein operates within cell wall biogenesis; peptidoglycan biosynthesis. Its function is as follows. Cell wall formation. The protein is UDP-N-acetylmuramate--L-alanine ligase of Granulibacter bethesdensis (strain ATCC BAA-1260 / CGDNIH1).